Reading from the N-terminus, the 537-residue chain is 5,6-dihydroxyindole-2-carboxylic acid oxidase (537 aa).

The first 24 residues, 1 to 24, serve as a signal peptide directing secretion; the sequence is MKSYNVLPLAYISLFLMLFYQVWA. At 25–477 the chain is on the lumenal, melanosome side; sequence QFPRECANIE…WPGQEFTVSE (453 aa). 5 disulfides stabilise this stretch: Cys-30/Cys-41, Cys-42/Cys-65, Cys-56/Cys-99, Cys-101/Cys-110, and Cys-113/Cys-122. N-linked (GlcNAc...) asparagine glycosylation is found at Asn-96 and Asn-104. Asn-181 carries N-linked (GlcNAc...) asparagine glycosylation. His-192, His-215, and His-224 together coordinate Zn(2+). 2 disulfides stabilise this stretch: Cys-258–Cys-261 and Cys-290–Cys-303. 2 N-linked (GlcNAc...) asparagine glycosylation sites follow: Asn-304 and Asn-350. Positions 377 and 381 each coordinate Zn(2+). Asn-385 is a glycosylation site (N-linked (GlcNAc...) asparagine). His-404 is a Zn(2+) binding site. A helical transmembrane segment spans residues 478 to 501; sequence IITIAVVAALLLVAAIFGVASCLI. Residues 502–537 lie on the Cytoplasmic side of the membrane; it reads RSRSTKNEANQPLLTDHYQRYAEDYEELPNPNHSMV.

This sequence belongs to the tyrosinase family. In terms of assembly, monomer. Interacts with ATP7A. Interacts with SLC45A2. It depends on Cu(2+) as a cofactor. Requires Zn(2+) as cofactor. In terms of processing, glycosylated. Pigment cells.

The protein localises to the melanosome membrane. The enzyme catalyses 2 5,6-dihydroxyindole-2-carboxylate + O2 = 2 indole-5,6-quinone-2-carboxylate + 2 H2O. It functions in the pathway pigment biosynthesis; melanin biosynthesis. Plays a role in melanin biosynthesis. Catalyzes the oxidation of 5,6-dihydroxyindole-2-carboxylic acid (DHICA) into indole-5,6-quinone-2-carboxylic acid. May regulate or influence the type of melanin synthesized. Also to a lower extent, capable of hydroxylating tyrosine and producing melanin. The protein is 5,6-dihydroxyindole-2-carboxylic acid oxidase (Tyrp1) of Mus musculus (Mouse).